A 185-amino-acid polypeptide reads, in one-letter code: ATP synthase subunit delta (185 aa).

It belongs to the ATPase delta chain family. F-type ATPases have 2 components, F(1) - the catalytic core - and F(0) - the membrane proton channel. F(1) has five subunits: alpha(3), beta(3), gamma(1), delta(1), epsilon(1). CF(0) has four main subunits: a(1), b(1), b'(1) and c(10-14). The alpha and beta chains form an alternating ring which encloses part of the gamma chain. F(1) is attached to F(0) by a central stalk formed by the gamma and epsilon chains, while a peripheral stalk is formed by the delta, b and b' chains.

It localises to the cellular thylakoid membrane. F(1)F(0) ATP synthase produces ATP from ADP in the presence of a proton or sodium gradient. F-type ATPases consist of two structural domains, F(1) containing the extramembraneous catalytic core and F(0) containing the membrane proton channel, linked together by a central stalk and a peripheral stalk. During catalysis, ATP synthesis in the catalytic domain of F(1) is coupled via a rotary mechanism of the central stalk subunits to proton translocation. Its function is as follows. This protein is part of the stalk that links CF(0) to CF(1). It either transmits conformational changes from CF(0) to CF(1) or is implicated in proton conduction. The chain is ATP synthase subunit delta from Crocosphaera subtropica (strain ATCC 51142 / BH68) (Cyanothece sp. (strain ATCC 51142)).